The primary structure comprises 206 residues: ATP-dependent Clp protease proteolytic subunit 1 (206 aa).

The active-site Nucleophile is the serine 103. Histidine 128 is a catalytic residue.

The protein belongs to the peptidase S14 family. In terms of assembly, fourteen ClpP subunits assemble into 2 heptameric rings which stack back to back to give a disk-like structure with a central cavity, resembling the structure of eukaryotic proteasomes.

Its subcellular location is the cytoplasm. It carries out the reaction Hydrolysis of proteins to small peptides in the presence of ATP and magnesium. alpha-casein is the usual test substrate. In the absence of ATP, only oligopeptides shorter than five residues are hydrolyzed (such as succinyl-Leu-Tyr-|-NHMec, and Leu-Tyr-Leu-|-Tyr-Trp, in which cleavage of the -Tyr-|-Leu- and -Tyr-|-Trp bonds also occurs).. In terms of biological role, cleaves peptides in various proteins in a process that requires ATP hydrolysis. Has a chymotrypsin-like activity. Plays a major role in the degradation of misfolded proteins. The polypeptide is ATP-dependent Clp protease proteolytic subunit 1 (Protochlamydia amoebophila (strain UWE25)).